The sequence spans 323 residues: Thiamine-monophosphate kinase (323 aa).

Asp30, Ser45, Thr46, and Asp47 together coordinate Mg(2+). Residue His54 coordinates substrate. Mg(2+) contacts are provided by Asp75 and Asp122. Residues 121–122 (GD) and Arg146 each bind ATP. Residue Asp212 participates in Mg(2+) binding. Residue Ser214 coordinates ATP. A Mg(2+)-binding site is contributed by Asp215. Substrate is bound by residues Glu263 and Phe319.

It belongs to the thiamine-monophosphate kinase family.

It catalyses the reaction thiamine phosphate + ATP = thiamine diphosphate + ADP. Its pathway is cofactor biosynthesis; thiamine diphosphate biosynthesis; thiamine diphosphate from thiamine phosphate: step 1/1. In terms of biological role, catalyzes the ATP-dependent phosphorylation of thiamine-monophosphate (TMP) to form thiamine-pyrophosphate (TPP), the active form of vitamin B1. The protein is Thiamine-monophosphate kinase of Buchnera aphidicola subsp. Schizaphis graminum (strain Sg).